Here is a 706-residue protein sequence, read N- to C-terminus: Choline transporter-like protein 2 (706 aa).

Over M1 to D32 the chain is Cytoplasmic. A helical membrane pass occupies residues I33–A53. At W54–W232 the chain is on the extracellular side. N187 and N210 each carry an N-linked (GlcNAc...) asparagine glycan. A helical transmembrane segment spans residues Y233 to L253. Topologically, residues R254–L256 are cytoplasmic. The helical transmembrane segment at A257 to F277 threads the bilayer. Residues H278–W315 are Extracellular-facing. N293 carries an N-linked (GlcNAc...) asparagine glycan. The helical transmembrane segment at L316–L336 threads the bilayer. Over R337–P364 the chain is Cytoplasmic. The helical transmembrane segment at L365 to L385 threads the bilayer. The Extracellular segment spans residues S386–F454. 2 N-linked (GlcNAc...) asparagine glycosylation sites follow: N397 and N412. The helical transmembrane segment at W455 to W477 threads the bilayer. Topologically, residues A478–S504 are cytoplasmic. A helical transmembrane segment spans residues L505–I525. Over D526–D599 the chain is Extracellular. The helical transmembrane segment at F600–F620 threads the bilayer. The Cytoplasmic portion of the chain corresponds to F621–Y638. Residues W639–V659 traverse the membrane as a helical segment. At Y660–E706 the chain is on the extracellular side.

The protein belongs to the CTL (choline transporter-like) family.

The protein resides in the cell membrane. The protein localises to the mitochondrion outer membrane. The enzyme catalyses choline(out) + n H(+)(in) = choline(in) + n H(+)(out). It carries out the reaction ethanolamine(out) + n H(+)(in) = ethanolamine(in) + n H(+)(out). Its function is as follows. Choline/H+ antiporter, mainly in mitochodria. Also acts as a low-affinity ethanolamine/H+ antiporter, regulating the supply of extracellular ethanolamine (Etn) for the CDP-Etn pathway, redistribute intracellular Etn and balance the CDP-Cho and CDP-Etn arms of the Kennedy pathway. In Salmo salar (Atlantic salmon), this protein is Choline transporter-like protein 2 (slc44a2).